The following is a 79-amino-acid chain: Putative defensin-like protein 309 (79 aa).

The signal sequence occupies residues 1–19; the sequence is MKILAFFIFVLLIFSCSSS. 3 disulfides stabilise this stretch: Cys-31–Cys-50, Cys-37–Cys-55, and Cys-41–Cys-57.

It belongs to the DEFL family.

The protein resides in the secreted. The protein is Putative defensin-like protein 309 of Arabidopsis thaliana (Mouse-ear cress).